A 144-amino-acid polypeptide reads, in one-letter code: Ribonuclease VapC37 (144 aa).

The PINc domain maps to Ile3–Trp137. Residues Asp5 and Asp90 each contribute to the Mg(2+) site.

This sequence belongs to the PINc/VapC protein family. Requires Mg(2+) as cofactor.

Its subcellular location is the secreted. Functionally, probable toxic component of a type II toxin-antitoxin (TA) system. An RNase. Upon expression in M.smegmatis inhibits colony formation. The putative cognate antitoxin is VapB37. The polypeptide is Ribonuclease VapC37 (Mycobacterium tuberculosis (strain ATCC 25618 / H37Rv)).